Reading from the N-terminus, the 299-residue chain is NAD(+) hydrolase PdTIR (299 aa).

Positions 164–297 (PPHDIFISHA…EIVADLMAII (134 aa)) constitute a TIR domain. Residues 173–174 (AW) and Arg-203 each bind NAD(+). Glu-239 is a catalytic residue.

In terms of assembly, homodimer. Interacts with host MYD88.

It catalyses the reaction NAD(+) + H2O = ADP-D-ribose + nicotinamide + H(+). NAD(+) hydrolase (NADase) that catalyzes cleavage of NAD(+) into ADP-D-ribose (ADPR) and nicotinamide. The protein is NAD(+) hydrolase PdTIR of Paracoccus denitrificans (strain Pd 1222).